A 346-amino-acid chain; its full sequence is Putative [LysW]-L-2-aminoadipate/[LysW]-L-glutamate phosphate reductase (346 aa).

An NADP(+)-binding site is contributed by 12 to 15; it reads SGFT. The active site involves Cys147. Asn310 provides a ligand contact to NADP(+).

Belongs to the NAGSA dehydrogenase family. Type 1 subfamily. LysY sub-subfamily.

The protein localises to the cytoplasm. It catalyses the reaction [amino-group carrier protein]-C-terminal-N-(1-carboxy-5-oxopentan-1-yl)-L-glutamine + phosphate + NADP(+) = [amino-group carrier protein]-C-terminal-N-(1-carboxy-5-phosphooxy-5-oxopentan-1-yl)-L-glutamine + NADPH + H(+). It carries out the reaction [amino-group carrier protein]-C-terminal-gamma-(L-glutamyl-5-semialdehyde)-L-glutamate + phosphate + NADP(+) = [amino-group carrier protein]-C-terminal-gamma-(5-phospho-L-glutamyl)-L-glutamate + NADPH + H(+). It functions in the pathway amino-acid biosynthesis; L-lysine biosynthesis via AAA pathway; L-lysine from L-alpha-aminoadipate (Thermus route): step 3/5. Its pathway is amino-acid biosynthesis; L-arginine biosynthesis. Functionally, involved in both the arginine and lysine biosynthetic pathways. The chain is Putative [LysW]-L-2-aminoadipate/[LysW]-L-glutamate phosphate reductase from Natronomonas pharaonis (strain ATCC 35678 / DSM 2160 / CIP 103997 / JCM 8858 / NBRC 14720 / NCIMB 2260 / Gabara) (Halobacterium pharaonis).